Consider the following 471-residue polypeptide: ATP synthase subunit beta (471 aa).

156 to 163 (GGAGVGKT) contributes to the ATP binding site.

The protein belongs to the ATPase alpha/beta chains family. As to quaternary structure, F-type ATPases have 2 components, CF(1) - the catalytic core - and CF(0) - the membrane proton channel. CF(1) has five subunits: alpha(3), beta(3), gamma(1), delta(1), epsilon(1). CF(0) has three main subunits: a(1), b(2) and c(9-12). The alpha and beta chains form an alternating ring which encloses part of the gamma chain. CF(1) is attached to CF(0) by a central stalk formed by the gamma and epsilon chains, while a peripheral stalk is formed by the delta and b chains.

The protein localises to the cell membrane. It catalyses the reaction ATP + H2O + 4 H(+)(in) = ADP + phosphate + 5 H(+)(out). Produces ATP from ADP in the presence of a proton gradient across the membrane. The catalytic sites are hosted primarily by the beta subunits. This is ATP synthase subunit beta from Lawsonia intracellularis (strain PHE/MN1-00).